A 553-amino-acid chain; its full sequence is Dihydroxy-acid dehydratase (553 aa).

Asp78 lines the Mg(2+) pocket. Cys119 lines the [2Fe-2S] cluster pocket. The Mg(2+) site is built by Asp120 and Lys121. N6-carboxylysine is present on Lys121. Cys193 contacts [2Fe-2S] cluster. Position 441 (Glu441) interacts with Mg(2+). Residue Ser467 is the Proton acceptor of the active site.

It belongs to the IlvD/Edd family. Homodimer. The cofactor is [2Fe-2S] cluster. It depends on Mg(2+) as a cofactor.

The catalysed reaction is (2R)-2,3-dihydroxy-3-methylbutanoate = 3-methyl-2-oxobutanoate + H2O. The enzyme catalyses (2R,3R)-2,3-dihydroxy-3-methylpentanoate = (S)-3-methyl-2-oxopentanoate + H2O. It functions in the pathway amino-acid biosynthesis; L-isoleucine biosynthesis; L-isoleucine from 2-oxobutanoate: step 3/4. The protein operates within amino-acid biosynthesis; L-valine biosynthesis; L-valine from pyruvate: step 3/4. Functions in the biosynthesis of branched-chain amino acids. Catalyzes the dehydration of (2R,3R)-2,3-dihydroxy-3-methylpentanoate (2,3-dihydroxy-3-methylvalerate) into 2-oxo-3-methylpentanoate (2-oxo-3-methylvalerate) and of (2R)-2,3-dihydroxy-3-methylbutanoate (2,3-dihydroxyisovalerate) into 2-oxo-3-methylbutanoate (2-oxoisovalerate), the penultimate precursor to L-isoleucine and L-valine, respectively. In Geotalea daltonii (strain DSM 22248 / JCM 15807 / FRC-32) (Geobacter daltonii), this protein is Dihydroxy-acid dehydratase.